Here is a 156-residue protein sequence, read N- to C-terminus: Small ribosomal subunit protein uS7 (156 aa).

It belongs to the universal ribosomal protein uS7 family. Part of the 30S ribosomal subunit. Contacts proteins S9 and S11.

Its function is as follows. One of the primary rRNA binding proteins, it binds directly to 16S rRNA where it nucleates assembly of the head domain of the 30S subunit. Is located at the subunit interface close to the decoding center, probably blocks exit of the E-site tRNA. This is Small ribosomal subunit protein uS7 from Carsonella ruddii (strain PV).